The chain runs to 308 residues: MFKKRNLKWLSILATVIMAWVQLGGALVTKTGSENGCGASWPLCHGALLPQNLPIATIIELSHRATSALSLIVVLWLVITAWKNIGYIKEVKPLCIISVAFLLIQALVGAAAVLWQQNDYVLALHFGISLISFSSVFVLTLIIFDVDQKYEANKVHIDRKLRIYTWTMAICLYVGIYTGALVRHTKSSLAYGSWPLPFNDLIPHTEQDWVQLAHRTLALIASISVFLAFNYAIKHYQNNRTIRYGYTAALLLIILQIVTGALSIFTHVNLIIALLHALIITFEFGLIAYLIVLLLRSQRVEKVKQNAY.

Residues 1-8 (MFKKRNLK) are Cytoplasmic-facing. A helical transmembrane segment spans residues 9-29 (WLSILATVIMAWVQLGGALVT). Residues 30–67 (KTGSENGCGASWPLCHGALLPQNLPIATIIELSHRATS) lie on the Extracellular side of the membrane. Cys-37 and Cys-44 are oxidised to a cystine. The active site involves Glu-60. His-63 provides a ligand contact to heme o. The chain crosses the membrane as a helical span at residues 68–88 (ALSLIVVLWLVITAWKNIGYI). At 89-93 (KEVKP) the chain is on the cytoplasmic side. The helical transmembrane segment at 94-114 (LCIISVAFLLIQALVGAAAVL) threads the bilayer. Topologically, residues 115–123 (WQQNDYVLA) are extracellular. The helical transmembrane segment at 124-144 (LHFGISLISFSSVFVLTLIIF) threads the bilayer. Residue His-125 coordinates heme o. At 145 to 161 (DVDQKYEANKVHIDRKL) the chain is on the cytoplasmic side. Residues 162 to 182 (RIYTWTMAICLYVGIYTGALV) traverse the membrane as a helical segment. Residues 183 to 215 (RHTKSSLAYGSWPLPFNDLIPHTEQDWVQLAHR) lie on the Extracellular side of the membrane. His-214 is a binding site for heme b. A helical transmembrane segment spans residues 216 to 236 (TLALIASISVFLAFNYAIKHY). Topologically, residues 237–244 (QNNRTIRY) are cytoplasmic. A helical membrane pass occupies residues 245–265 (GYTAALLLIILQIVTGALSIF). The Extracellular portion of the chain corresponds to 266–270 (THVNL). A helical membrane pass occupies residues 271–291 (IIALLHALIITFEFGLIAYLI). His-276 provides a ligand contact to heme b. Residues 292–308 (VLLLRSQRVEKVKQNAY) are Cytoplasmic-facing.

The protein belongs to the COX15/CtaA family. Type 1 subfamily. In terms of assembly, interacts with CtaB. Requires heme b as cofactor.

It localises to the cell membrane. The enzyme catalyses Fe(II)-heme o + 2 A + H2O = Fe(II)-heme a + 2 AH2. It participates in porphyrin-containing compound metabolism; heme A biosynthesis; heme A from heme O: step 1/1. Functionally, catalyzes the conversion of heme O to heme A by two successive hydroxylations of the methyl group at C8. The first hydroxylation forms heme I, the second hydroxylation results in an unstable dihydroxymethyl group, which spontaneously dehydrates, resulting in the formyl group of heme A. This chain is Heme A synthase, found in Staphylococcus carnosus (strain TM300).